Here is a 138-residue protein sequence, read N- to C-terminus: UPF0201 protein TK1335 (138 aa).

The protein belongs to the UPF0201 family.

This is UPF0201 protein TK1335 from Thermococcus kodakarensis (strain ATCC BAA-918 / JCM 12380 / KOD1) (Pyrococcus kodakaraensis (strain KOD1)).